A 264-amino-acid polypeptide reads, in one-letter code: Zinc import ATP-binding protein ZnuC (264 aa).

The region spanning 11-226 is the ABC transporter domain; sequence IELKGVNVTF…PVFIRFFGNQ (216 aa). An ATP-binding site is contributed by 43–50; sequence GPNGGGKS.

It belongs to the ABC transporter superfamily. Zinc importer (TC 3.A.1.15.5) family. As to quaternary structure, the complex is composed of two ATP-binding proteins (ZnuC), two transmembrane proteins (ZnuB) and a solute-binding protein (ZnuA).

It localises to the cell inner membrane. The enzyme catalyses Zn(2+)(out) + ATP(in) + H2O(in) = Zn(2+)(in) + ADP(in) + phosphate(in) + H(+)(in). Part of the ABC transporter complex ZnuABC involved in zinc import. Responsible for energy coupling to the transport system. This is Zinc import ATP-binding protein ZnuC from Histophilus somni (strain 129Pt) (Haemophilus somnus).